Here is a 419-residue protein sequence, read N- to C-terminus: CinA-like protein (419 aa).

It belongs to the CinA family.

The protein is CinA-like protein of Acaryochloris marina (strain MBIC 11017).